The following is a 169-amino-acid chain: E1B protein, small T-antigen (169 aa).

It belongs to the adenoviridae E1B 19 kDa protein family.

This chain is E1B protein, small T-antigen, found in Canine adenovirus serotype 1 (strain CLL) (CAdV-1).